Consider the following 124-residue polypeptide: MASFHIIVSYVTVVLAIIIAITFAARRFWISRYRSIRYSPVENSFEADFNNGLNSSSFDIAQNILAQDTRAGLDEAATSQIRGLMKQLQCSFDQARLIYIRKVMSDNNVDSTGMPLDNKAVTKL.

Residues 1–24 (MASFHIIVSYVTVVLAIIIAITFA) form the signal peptide.

The protein belongs to the UPF0357 family.

The sequence is that of UPF0357 protein C1687.07 from Schizosaccharomyces pombe (strain 972 / ATCC 24843) (Fission yeast).